Reading from the N-terminus, the 442-residue chain is Coiled-coil domain-containing protein 91 (442 aa).

A GGA1-binding motif region spans residues 1–16; it reads MDDDDFGGFEAAETFD. The interval 1 to 27 is disordered; sequence MDDDDFGGFEAAETFDGEQGGNQAVSP. Phosphoserine is present on residues Ser43 and Ser46. The interval 48-79 is disordered; it reads ELILDHDRSSPSSGHLRSDAVISSPDDTRADS. Coiled coils occupy residues 127-213 and 248-409; these read GVHV…ALSI and CEEL…RLDQ. The segment at 211-414 is homodimerization; it reads LSIIVDEYKA…RRLDQVTRQR (204 aa).

As to quaternary structure, homodimer. Interacts with GGA1, GGA2 and AP1G1.

It localises to the membrane. The protein resides in the golgi apparatus. The protein localises to the trans-Golgi network membrane. It is found in the trans-Golgi network. Involved in the regulation of membrane traffic through the trans-Golgi network (TGN). Functions in close cooperation with the GGAs in the sorting of hydrolases to lysosomes. The sequence is that of Coiled-coil domain-containing protein 91 (Ccdc91) from Rattus norvegicus (Rat).